The primary structure comprises 130 residues: Small ribosomal subunit protein uS11c (130 aa).

The protein belongs to the universal ribosomal protein uS11 family. Part of the 30S ribosomal subunit.

Its subcellular location is the plastid. The protein resides in the chloroplast. This is Small ribosomal subunit protein uS11c from Mesostigma viride (Green alga).